We begin with the raw amino-acid sequence, 255 residues long: Isoprenyl transferase (255 aa).

Asp-35 is an active-site residue. Asp-35 contacts Mg(2+). Substrate contacts are provided by residues 36 to 39 (GNGR), Trp-40, Arg-48, His-52, and 80 to 82 (STE). Asn-83 functions as the Proton acceptor in the catalytic mechanism. Residues Trp-84, Arg-86, Arg-203, and 209 to 211 (RIS) each bind substrate. Residue Glu-222 participates in Mg(2+) binding.

It belongs to the UPP synthase family. As to quaternary structure, homodimer. The cofactor is Mg(2+).

Catalyzes the condensation of isopentenyl diphosphate (IPP) with allylic pyrophosphates generating different type of terpenoids. This Clostridium tetani (strain Massachusetts / E88) protein is Isoprenyl transferase.